Consider the following 350-residue polypeptide: GDSL esterase/lipase At2g42990 (350 aa).

The first 24 residues, 1–24 (MATHYLSPSILCIILTTLVSIAGA), serve as a signal peptide directing secretion. Ser35 acts as the Nucleophile in catalysis. Residues Asn98, Asn117, and Asn141 are each glycosylated (N-linked (GlcNAc...) asparagine). Residues Asp325 and His328 contribute to the active site.

The protein belongs to the 'GDSL' lipolytic enzyme family.

Its subcellular location is the secreted. This chain is GDSL esterase/lipase At2g42990, found in Arabidopsis thaliana (Mouse-ear cress).